The sequence spans 111 residues: Wound-induced proteinase inhibitor 1 (111 aa).

An N-terminal signal peptide occupies residues 1–23 (MESKFAHIIVFFLLATSFETLMA). The propeptide occupies 24 to 36 (RKEIDGPEVIELL).

It belongs to the protease inhibitor I13 (potato type I serine protease inhibitor) family.

It is found in the secreted. The protein is Wound-induced proteinase inhibitor 1 (PIIF) of Solanum lycopersicum (Tomato).